Consider the following 360-residue polypeptide: Photosystem II protein D1 (360 aa).

Transmembrane regions (helical) follow at residues 29 to 46 (YIGW…TATT), 118 to 133 (HFLL…QWEL), and 142 to 156 (WICV…AATA). His118 is a binding site for chlorophyll a. A pheophytin a-binding site is contributed by Tyr126. 2 residues coordinate [CaMn4O5] cluster: Asp170 and Glu189. The chain crosses the membrane as a helical span at residues 197-218 (FHMLGVAGVFGGSLFSAMHGSL). His198 provides a ligand contact to chlorophyll a. Residues His215 and 264–265 (SF) contribute to the a quinone site. Fe cation is bound at residue His215. His272 is a binding site for Fe cation. A helical membrane pass occupies residues 274–288 (FLGAWPVIGIWFTAM). [CaMn4O5] cluster contacts are provided by His332, Glu333, Asp342, and Ala344. The propeptide occupies 345–360 (SGEQAPVALIAPAING).

This sequence belongs to the reaction center PufL/M/PsbA/D family. In terms of assembly, PSII is composed of 1 copy each of membrane proteins PsbA, PsbB, PsbC, PsbD, PsbE, PsbF, PsbH, PsbI, PsbJ, PsbK, PsbL, PsbM, PsbT, PsbX, PsbY, PsbZ, Psb30/Ycf12, peripheral proteins PsbO, CyanoQ (PsbQ), PsbU, PsbV and a large number of cofactors. It forms dimeric complexes. The D1/D2 heterodimer binds P680, chlorophylls that are the primary electron donor of PSII, and subsequent electron acceptors. It shares a non-heme iron and each subunit binds pheophytin, quinone, additional chlorophylls, carotenoids and lipids. D1 provides most of the ligands for the Mn4-Ca-O5 cluster of the oxygen-evolving complex (OEC). There is also a Cl(-1) ion associated with D1 and D2, which is required for oxygen evolution. The PSII complex binds additional chlorophylls, carotenoids and specific lipids. serves as cofactor. In terms of processing, tyr-161 forms a radical intermediate that is referred to as redox-active TyrZ, YZ or Y-Z. Post-translationally, C-terminally processed by CtpA; processing is essential to allow assembly of the oxygen-evolving complex and thus photosynthetic growth.

The protein localises to the cellular thylakoid membrane. The enzyme catalyses 2 a plastoquinone + 4 hnu + 2 H2O = 2 a plastoquinol + O2. Functionally, photosystem II (PSII) is a light-driven water:plastoquinone oxidoreductase that uses light energy to abstract electrons from H(2)O, generating O(2) and a proton gradient subsequently used for ATP formation. It consists of a core antenna complex that captures photons, and an electron transfer chain that converts photonic excitation into a charge separation. The D1/D2 (PsbA/PsbD) reaction center heterodimer binds P680, the primary electron donor of PSII as well as several subsequent electron acceptors. The protein is Photosystem II protein D1 of Microcystis aeruginosa (strain NIES-843 / IAM M-2473).